A 202-amino-acid polypeptide reads, in one-letter code: Small ribosomal subunit protein uS5 (202 aa).

Residues 1–13 (MPGQQRRGGGSGG) are compositionally biased toward gly residues. Positions 1–31 (MPGQQRRGGGSGGSDRRERRDRSGSGPAQEK) are disordered. Basic and acidic residues predominate over residues 14 to 23 (SDRRERRDRS). Residues 34 to 97 (YVERVVAINR…EEAKKHFFKV (64 aa)) form the S5 DRBM domain.

This sequence belongs to the universal ribosomal protein uS5 family. In terms of assembly, part of the 30S ribosomal subunit. Contacts proteins S4 and S8.

In terms of biological role, with S4 and S12 plays an important role in translational accuracy. Its function is as follows. Located at the back of the 30S subunit body where it stabilizes the conformation of the head with respect to the body. This is Small ribosomal subunit protein uS5 from Frankia casuarinae (strain DSM 45818 / CECT 9043 / HFP020203 / CcI3).